Reading from the N-terminus, the 1417-residue chain is DNA-directed RNA polymerase subunit beta' (1417 aa).

Zn(2+)-binding residues include cysteine 68, cysteine 70, cysteine 83, and cysteine 86. Mg(2+) is bound by residues aspartate 458, aspartate 460, and aspartate 462. Zn(2+) contacts are provided by cysteine 811, cysteine 884, cysteine 891, and cysteine 894.

Belongs to the RNA polymerase beta' chain family. As to quaternary structure, the RNAP catalytic core consists of 2 alpha, 1 beta, 1 beta' and 1 omega subunit. When a sigma factor is associated with the core the holoenzyme is formed, which can initiate transcription. Mg(2+) serves as cofactor. It depends on Zn(2+) as a cofactor.

It carries out the reaction RNA(n) + a ribonucleoside 5'-triphosphate = RNA(n+1) + diphosphate. Its function is as follows. DNA-dependent RNA polymerase catalyzes the transcription of DNA into RNA using the four ribonucleoside triphosphates as substrates. The polypeptide is DNA-directed RNA polymerase subunit beta' (Francisella tularensis subsp. tularensis (strain FSC 198)).